Consider the following 498-residue polypeptide: Acetyl-coenzyme A carboxylase carboxyl transferase subunit beta, chloroplastic (498 aa).

Residues 228–498 (LWVQCEICYG…LNHNLSRTLT (271 aa)) form the CoA carboxyltransferase N-terminal domain. The Zn(2+) site is built by cysteine 232, cysteine 235, cysteine 251, and cysteine 254. The C4-type zinc finger occupies 232–254 (CEICYGLNYKKFFKSKMNICEQC).

It belongs to the AccD/PCCB family. In terms of assembly, acetyl-CoA carboxylase is a heterohexamer composed of biotin carboxyl carrier protein, biotin carboxylase and 2 subunits each of ACCase subunit alpha and ACCase plastid-coded subunit beta (accD). Zn(2+) is required as a cofactor.

It is found in the plastid. The protein localises to the chloroplast stroma. It carries out the reaction N(6)-carboxybiotinyl-L-lysyl-[protein] + acetyl-CoA = N(6)-biotinyl-L-lysyl-[protein] + malonyl-CoA. The protein operates within lipid metabolism; malonyl-CoA biosynthesis; malonyl-CoA from acetyl-CoA: step 1/1. Its function is as follows. Component of the acetyl coenzyme A carboxylase (ACC) complex. Biotin carboxylase (BC) catalyzes the carboxylation of biotin on its carrier protein (BCCP) and then the CO(2) group is transferred by the transcarboxylase to acetyl-CoA to form malonyl-CoA. This chain is Acetyl-coenzyme A carboxylase carboxyl transferase subunit beta, chloroplastic, found in Populus trichocarpa (Western balsam poplar).